Reading from the N-terminus, the 1529-residue chain is Myosin-11 (1529 aa).

The Myosin N-terminal SH3-like domain maps to 11 to 60; it reads IVGSHVWIEDSDVAWIDGLVEKINGQDVEVQATNGKKITAKLSKIYPKDM. The 671-residue stretch at 65–735 folds into the Myosin motor domain; the sequence is GGVDDMTKLS…QMAELDARRT (671 aa). Residues 159–166 and 212–220 each bind ATP; these read GESGAGKT and NNNSSRFGK. Actin-binding stretches follow at residues 498-532, 534-557, 592-616, and 616-638; these read LIEK…YQTF, THKR…AGEV, FPPL…KLQL, and LQQL…KPNN. IQ domains follow at residues 738–767, 761–790, 786–815, 809–838, 834–863, and 857–886; these read LSAA…ATIS, LRKA…QAAA, RQAA…AALV, LHVA…TKAA, QTKA…GVIL, and LKKG…ASRE. A coiled-coil region spans residues 887–1059; it reads TGALKEAKDM…VLRQQAVSIA (173 aa). A compositionally biased stretch (basic and acidic residues) spans 993–1027; it reads EQEKQRADDATRKFDEAQESSEDRKKKLEDTEKKA. Disordered stretches follow at residues 993–1031 and 1096–1115; these read EQEK…QQLQ and INRR…LNEK. The Dilute domain occupies 1163–1472; it reads DRIIQTIGQA…IANMRVLMTE (310 aa).

The protein belongs to the TRAFAC class myosin-kinesin ATPase superfamily. Myosin family. Plant myosin class XI subfamily. Homodimer.

Its subcellular location is the cytoplasm. Functionally, myosin heavy chain that is required for the cell cycle-regulated transport of various organelles and proteins for their segregation. Functions by binding with its tail domain to receptor proteins on organelles and exerting force with its N-terminal motor domain against actin filaments, thereby transporting its cargo along polarized actin cables. Involved in trafficking of Golgi stacks, mitochondria and peroxisomes. The polypeptide is Myosin-11 (XI-E) (Arabidopsis thaliana (Mouse-ear cress)).